The chain runs to 137 residues: MRGLKSNKPKPRIQKVSVRKFRRKVLSLSQILSRLRQKRNQKIEQQKRNKPIKPLIPPKTLVIVLKEKPEKTLYNRRYIDYKHSGLLQRYIGLGGKILPRRQTRLTAKQQRFVAKTIKTARVMGLLPFVSKERSFFK.

This sequence belongs to the bacterial ribosomal protein bS18 family. In terms of assembly, part of the 30S ribosomal subunit.

It localises to the plastid. The protein resides in the chloroplast. In Chlamydomonas reinhardtii (Chlamydomonas smithii), this protein is Small ribosomal subunit protein bS18c (rps18).